Reading from the N-terminus, the 488-residue chain is MITLFDSAKKQKIPFTPIQDNQIRLYVCGPTVYDDAHLGHARSSIVFDLWRRLFLFLGFEVVFVKNFTDIDDKIIKKSLQNNASVQEIGSHYIHSYLKDMASLGVLRADIEPKATDNLPQMCEMIQTLLHKGYAYEGENSDIYLRIHKDKNYGALSQRLEQSHTQSRIQNAQDKLEHNDFALWKGYKGENDIAYDSPFGKGRPGWHIECSAMIEKHLAYQNEEYGIDIHAGGSDLLFPHHENEASQTRCATGREIAKYWLHNGFVNINGEKMSKSLGNSFFIKDALKVYDGEILRNYLLGVHYRLALNFNEEDLLQSKKRLDKLYRLKKRVIESHIQSPQITREEIKQFTHNIKETAKEAHKTFLSSLVEALSDDYNISKALSIIEDMLSTSNEYLDKNPKDKAYKQAIKANLACIEFLLGLGGKSTQSYFQLGLDEKTKQEIESKIAKRQEAKAQKNYALADKLRDELKSQGIEIMDTPQGSTWEKI.

Cys-28 contributes to the Zn(2+) binding site. The short motif at 30–40 is the 'HIGH' region element; sequence PTVYDDAHLGH. 3 residues coordinate Zn(2+): Cys-209, His-239, and Glu-243. Positions 271 to 275 match the 'KMSKS' region motif; sequence KMSKS. Lys-274 contacts ATP.

This sequence belongs to the class-I aminoacyl-tRNA synthetase family. Monomer. It depends on Zn(2+) as a cofactor.

The protein localises to the cytoplasm. The catalysed reaction is tRNA(Cys) + L-cysteine + ATP = L-cysteinyl-tRNA(Cys) + AMP + diphosphate. This Helicobacter hepaticus (strain ATCC 51449 / 3B1) protein is Cysteine--tRNA ligase.